The chain runs to 409 residues: LL-diaminopimelate aminotransferase (409 aa).

The substrate site is built by Tyr15 and Gly42. Residues Tyr72, 108 to 109, Tyr132, Asn186, Tyr217, and 245 to 247 each bind pyridoxal 5'-phosphate; these read AK and SFS. Residues Lys109, Tyr132, and Asn186 each coordinate substrate. At Lys248 the chain carries N6-(pyridoxal phosphate)lysine. Residues Arg256 and Asn291 each coordinate pyridoxal 5'-phosphate. Substrate is bound by residues Asn291 and Arg386.

It belongs to the class-I pyridoxal-phosphate-dependent aminotransferase family. LL-diaminopimelate aminotransferase subfamily. In terms of assembly, homodimer. Pyridoxal 5'-phosphate serves as cofactor.

It catalyses the reaction (2S,6S)-2,6-diaminopimelate + 2-oxoglutarate = (S)-2,3,4,5-tetrahydrodipicolinate + L-glutamate + H2O + H(+). Its pathway is amino-acid biosynthesis; L-lysine biosynthesis via DAP pathway; LL-2,6-diaminopimelate from (S)-tetrahydrodipicolinate (aminotransferase route): step 1/1. Involved in the synthesis of meso-diaminopimelate (m-DAP or DL-DAP), required for both lysine and peptidoglycan biosynthesis. Catalyzes the direct conversion of tetrahydrodipicolinate to LL-diaminopimelate. The sequence is that of LL-diaminopimelate aminotransferase from Desulforapulum autotrophicum (strain ATCC 43914 / DSM 3382 / VKM B-1955 / HRM2) (Desulfobacterium autotrophicum).